The chain runs to 102 residues: COX assembly mitochondrial protein 2 homolog (102 aa).

One can recognise a CHCH domain in the interval 11-55; that stretch reads TKECNMLIEFLQRCHSEKPIGKMIGKCSYWDEAVWQCTKKERIWR. 2 consecutive short sequence motifs (cx9C motif) follow at residues 14-24 and 37-47; these read CNMLIEFLQRC and CSYWDEAVWQC. Cystine bridges form between C14–C47 and C24–C37.

Belongs to the CMC family.

The protein localises to the mitochondrion. May be involved in cytochrome c oxidase biogenesis. The chain is COX assembly mitochondrial protein 2 homolog from Caenorhabditis elegans.